The sequence spans 407 residues: UPF0761 membrane protein AZOSEA40600 (407 aa).

6 helical membrane passes run 29 to 49, 92 to 112, 132 to 152, 174 to 194, 207 to 227, and 239 to 259; these read SLAFTTLLAIVPLLTVIIALF, GLTLIGTVLLVLTALMLLMTI, LMVHWFALTLGPLALGGSVLA, FARLVPTVLLGSLFSVLYYAV, GGIAAAIVFVLMQRLFGLFIV, and FAVLPIFLVWLYLSWVVILLG.

It belongs to the UPF0761 family.

The protein localises to the cell inner membrane. This chain is UPF0761 membrane protein AZOSEA40600, found in Aromatoleum aromaticum (strain DSM 19018 / LMG 30748 / EbN1) (Azoarcus sp. (strain EbN1)).